Reading from the N-terminus, the 239-residue chain is Probable transcriptional regulatory protein lin0388 (239 aa).

This sequence belongs to the TACO1 family. YeeN subfamily.

The protein localises to the cytoplasm. This is Probable transcriptional regulatory protein lin0388 from Listeria innocua serovar 6a (strain ATCC BAA-680 / CLIP 11262).